Reading from the N-terminus, the 89-residue chain is Small ribosomal subunit protein uS15 (89 aa).

The protein belongs to the universal ribosomal protein uS15 family. As to quaternary structure, part of the 30S ribosomal subunit. Forms a bridge to the 50S subunit in the 70S ribosome, contacting the 23S rRNA.

In terms of biological role, one of the primary rRNA binding proteins, it binds directly to 16S rRNA where it helps nucleate assembly of the platform of the 30S subunit by binding and bridging several RNA helices of the 16S rRNA. Forms an intersubunit bridge (bridge B4) with the 23S rRNA of the 50S subunit in the ribosome. The protein is Small ribosomal subunit protein uS15 of Frankia casuarinae (strain DSM 45818 / CECT 9043 / HFP020203 / CcI3).